Here is a 275-residue protein sequence, read N- to C-terminus: Formamidopyrimidine-DNA glycosylase (275 aa).

The Schiff-base intermediate with DNA role is filled by P2. Residue E3 is the Proton donor of the active site. The active-site Proton donor; for beta-elimination activity is K58. Residues H91, R109, and K154 each contribute to the DNA site. Residues 240-274 (AVYERAGLACRVCGTPIRRLVQGQRATYFCPHCQK) form an FPG-type zinc finger. R264 acts as the Proton donor; for delta-elimination activity in catalysis.

It belongs to the FPG family. As to quaternary structure, monomer. Requires Zn(2+) as cofactor.

It catalyses the reaction Hydrolysis of DNA containing ring-opened 7-methylguanine residues, releasing 2,6-diamino-4-hydroxy-5-(N-methyl)formamidopyrimidine.. The catalysed reaction is 2'-deoxyribonucleotide-(2'-deoxyribose 5'-phosphate)-2'-deoxyribonucleotide-DNA = a 3'-end 2'-deoxyribonucleotide-(2,3-dehydro-2,3-deoxyribose 5'-phosphate)-DNA + a 5'-end 5'-phospho-2'-deoxyribonucleoside-DNA + H(+). Involved in base excision repair of DNA damaged by oxidation or by mutagenic agents. Acts as a DNA glycosylase that recognizes and removes damaged bases. Has a preference for oxidized purines, such as 7,8-dihydro-8-oxoguanine (8-oxoG). Has AP (apurinic/apyrimidinic) lyase activity and introduces nicks in the DNA strand. Cleaves the DNA backbone by beta-delta elimination to generate a single-strand break at the site of the removed base with both 3'- and 5'-phosphates. This Bordetella avium (strain 197N) protein is Formamidopyrimidine-DNA glycosylase.